The chain runs to 245 residues: Photosystem II protein PSBS1 (245 aa).

The transit peptide at 1-25 (MAMTLSTKAFAQRGVSARKNTVRVY) directs the protein to the chloroplast. The next 4 membrane-spanning stretches (helical) occupy residues 72 to 92 (LFVG…EILT), 108 to 128 (GIEV…AAVL), 185 to 205 (LGFA…LAQF), and 217 to 237 (EFGL…EGSG).

This sequence belongs to the ELIP/psbS family.

Its subcellular location is the plastid. It is found in the chloroplast thylakoid membrane. Required for non-photochemical quenching (NPQ), a mechanism that converts and dissipates the harmful excess absorbed light energy into heat and protect the photosynthetic apparatus from photo-oxidative damage. Seems involved in the activation of NPQ, possibly by promoting conformational changes required for activation of LHCSR3-dependent quenching in the antenna of photosystem II (PSII). The protein is Photosystem II protein PSBS1 of Chlamydomonas reinhardtii (Chlamydomonas smithii).